The following is a 351-amino-acid chain: Glycerol-3-phosphate dehydrogenase 1-like protein (351 aa).

12–17 (GSGNWG) contacts NAD(+). Residue K122 coordinates substrate. Residue A155 participates in NAD(+) binding. K206 (proton acceptor) is an active-site residue. NAD(+) contacts are provided by R271, K298, and Q300. 271–272 (RN) is a binding site for substrate.

The protein belongs to the NAD-dependent glycerol-3-phosphate dehydrogenase family. Interacts with SCN5A. Most highly expressed in heart tissue, with lower levels in the skeletal muscle, kidney, lung and other organs.

It is found in the cytoplasm. It carries out the reaction sn-glycerol 3-phosphate + NAD(+) = dihydroxyacetone phosphate + NADH + H(+). Plays a role in regulating cardiac sodium current; decreased enzymatic activity with resulting increased levels of glycerol 3-phosphate activating the DPD1L-dependent SCN5A phosphorylation pathway, may ultimately lead to decreased sodium current; cardiac sodium current may also be reduced due to alterations of NAD(H) balance induced by DPD1L. In Homo sapiens (Human), this protein is Glycerol-3-phosphate dehydrogenase 1-like protein.